The sequence spans 99 residues: Small ribosomal subunit protein bS20 (99 aa).

This sequence belongs to the bacterial ribosomal protein bS20 family.

Functionally, binds directly to 16S ribosomal RNA. This is Small ribosomal subunit protein bS20 from Prochlorococcus marinus (strain SARG / CCMP1375 / SS120).